A 271-amino-acid chain; its full sequence is MTVKQSQASRLGPIFEACRDDDRAALIGYLPTGYPDVPTSVQAMVALVESGCDIVEVGVPYSDPGMDGPTIARATEAALHGGVRVRDTLAAVEAISAAGGRAVVMTYWNPVLRYGVDAFARDLAAAGGYGLITPDLIPDEAGQWLAASERHGLDRIFLVAPSSTPQRLALTVEASRGFVYAASTMGVTGARDAVSHAAPELVSRVREISDIPVGVGLGVRSREQAAQIGGYADGVIVGSALVSALGDGGLTALRALTEELAAGVRQRAAAS.

Catalysis depends on proton acceptor residues Glu56 and Asp67.

It belongs to the TrpA family. As to quaternary structure, tetramer of two alpha and two beta chains.

The catalysed reaction is (1S,2R)-1-C-(indol-3-yl)glycerol 3-phosphate + L-serine = D-glyceraldehyde 3-phosphate + L-tryptophan + H2O. It functions in the pathway amino-acid biosynthesis; L-tryptophan biosynthesis; L-tryptophan from chorismate: step 5/5. Its function is as follows. The alpha subunit is responsible for the aldol cleavage of indoleglycerol phosphate to indole and glyceraldehyde 3-phosphate. This Mycobacterium avium (strain 104) protein is Tryptophan synthase alpha chain.